The sequence spans 260 residues: Carbonic anhydrase 3 (260 aa).

Ala2 is modified (N-acetylalanine). The Alpha-carbonic anhydrase domain maps to 3-259 (KEWGYADHNG…IKGRIVKASF (257 aa)). 4 positions are modified to phosphoserine: Ser29, Ser43, Ser50, and Ser55. An involved in proton transfer region spans residues 64–67 (KTCR). Residue Thr73 is modified to Phosphothreonine. Positions 94, 96, and 119 each coordinate Zn(2+). Residue Tyr127 is modified to Phosphotyrosine. Thr176 is modified (phosphothreonine). An S-glutathionyl cysteine mark is found at Cys182 and Cys187. Position 198–199 (198–199 (TT)) interacts with substrate. Position 216 is a phosphothreonine (Thr216). Position 219 is a phosphoserine (Ser219).

The protein belongs to the alpha-carbonic anhydrase family. It depends on Zn(2+) as a cofactor. S-thiolated both by thiol-disulfide exchange with glutathione disulfide and by oxyradical-initiated S-thiolation with reduced glutathione. In terms of processing, S-glutathionylated in hepatocytes under oxidative stress.

The protein localises to the cytoplasm. It catalyses the reaction hydrogencarbonate + H(+) = CO2 + H2O. Inhibited by acetazolamide. Functionally, reversible hydration of carbon dioxide. The chain is Carbonic anhydrase 3 from Sus scrofa (Pig).